A 125-amino-acid polypeptide reads, in one-letter code: Small ribosomal subunit protein uS12m (125 aa).

A disordered region spans residues 1 to 50; that stretch reads MPSLNQLIRHGREEKRRTDRTRALDQCPQKQGVCPRVSTRTPKKPNSAPR. The segment covering 10 to 23 has biased composition (basic and acidic residues); that stretch reads HGREEKRRTDRTRA.

Belongs to the universal ribosomal protein uS12 family.

Its subcellular location is the mitochondrion. Functionally, protein S12 is involved in the translation initiation step. This is Small ribosomal subunit protein uS12m (RPS12) from Petunia hybrida (Petunia).